The following is a 360-amino-acid chain: tRNA N6-adenosine threonylcarbamoyltransferase (360 aa).

His115 and His119 together coordinate Fe cation. Substrate-binding positions include 137-141 (LVSGG), Asp170, Gly183, and Asn283. Fe cation is bound at residue Asp311.

This sequence belongs to the KAE1 / TsaD family. Fe(2+) serves as cofactor.

Its subcellular location is the cytoplasm. It catalyses the reaction L-threonylcarbamoyladenylate + adenosine(37) in tRNA = N(6)-L-threonylcarbamoyladenosine(37) in tRNA + AMP + H(+). Required for the formation of a threonylcarbamoyl group on adenosine at position 37 (t(6)A37) in tRNAs that read codons beginning with adenine. Is involved in the transfer of the threonylcarbamoyl moiety of threonylcarbamoyl-AMP (TC-AMP) to the N6 group of A37, together with TsaE and TsaB. TsaD likely plays a direct catalytic role in this reaction. In Rhizobium meliloti (strain 1021) (Ensifer meliloti), this protein is tRNA N6-adenosine threonylcarbamoyltransferase.